A 635-amino-acid polypeptide reads, in one-letter code: UvrABC system protein C (635 aa).

The GIY-YIG domain maps to 20 to 97 (ERSGVYRMFD…IKKFQPKFNI (78 aa)). A UVR domain is found at 207-242 (KELQENLSKKMEELSEQMRFEEAAEIRDRIKALSYV).

The protein belongs to the UvrC family. In terms of assembly, interacts with UvrB in an incision complex.

It localises to the cytoplasm. The UvrABC repair system catalyzes the recognition and processing of DNA lesions. UvrC both incises the 5' and 3' sides of the lesion. The N-terminal half is responsible for the 3' incision and the C-terminal half is responsible for the 5' incision. The protein is UvrABC system protein C of Rickettsia bellii (strain RML369-C).